We begin with the raw amino-acid sequence, 701 residues long: MNPIVKSFEYGQHTVTLETGVIARQADAAVLASMGDTTVLVTVVGKKAEEPGRDFFPLTVNYQEKTYAAGKIPGGFFKREGRPSESETLIARLIDRPIRPLFPNGFKNEVQVIITVVSVDPEINPDIISMIGTSAALAISGLPFNGPLGVARVGYTNGEYVLNPDVTQLVDSELDLVVAGTEGAVLMVESEAASLPEEVMLGGVVYGHEQQQVVINAISELKAEASKPAWDWTAPVQDQELVAKIKDLAEAGLTEAYQIEVKQDRYTQVGVIKSAAKEALLAENPEADLREIDGLLGSLEKKVVRSRIIAGNPRIDGREPDMVRALNVMAGVLPRTHGSSLFTRGETQALVTCTLGTERDAQKVDSIMGEYTNRFMLHYNFPPYSVGETGFVGSPKRREIGHGKLAWRGINAVMPSAEEFPYSVRVVSEITESNGSSSMASVCGTSLALMDAGVPIKTSVAGIAMGLVKEGDDFVVLSDILGDEDHLGDMDFKVAGTRDGITALQMDIKIEGITKDIMQIALQQAYGARVHILNVMDQAIGSHREDISDHAPRITTLKINPEKIRDVIGKGGATIRALTEETGTTIELEDDGTVKIASSNGEATKEAIRRIEEITAEVEVGTVYNGKVVRIVDFGAFVTILPGKDGLVHISQIAEERVANVSDYLEVGQEVKVKVMEVDRQGRVRLSMKEAAPKAEAPAAE.

Mg(2+) contacts are provided by Asp-485 and Asp-491. The region spanning 552–611 is the KH domain; that stretch reads PRITTLKINPEKIRDVIGKGGATIRALTEETGTTIELEDDGTVKIASSNGEATKEAIRRI. Residues 621–689 form the S1 motif domain; it reads GTVYNGKVVR…RQGRVRLSMK (69 aa).

The protein belongs to the polyribonucleotide nucleotidyltransferase family. In terms of assembly, component of the RNA degradosome, which is a multiprotein complex involved in RNA processing and mRNA degradation. Mg(2+) serves as cofactor.

The protein localises to the cytoplasm. The enzyme catalyses RNA(n+1) + phosphate = RNA(n) + a ribonucleoside 5'-diphosphate. Functionally, involved in mRNA degradation. Catalyzes the phosphorolysis of single-stranded polyribonucleotides processively in the 3'- to 5'-direction. This is Polyribonucleotide nucleotidyltransferase from Shewanella piezotolerans (strain WP3 / JCM 13877).